A 196-amino-acid polypeptide reads, in one-letter code: SPRY domain-containing protein 7 (196 aa).

Ala-2 carries the N-acetylalanine modification. The region spanning 2–184 is the B30.2/SPRY domain; the sequence is AASVFCCLRC…FSEFYHTPPP (183 aa).

This is SPRY domain-containing protein 7 (SPRYD7) from Bos taurus (Bovine).